Here is a 241-residue protein sequence, read N- to C-terminus: Prolactin-8A8 (241 aa).

A signal peptide spans M1–S30. Cystine bridges form between C34-C41, C101-C217, and C234-C241. The N-linked (GlcNAc...) asparagine glycan is linked to N213.

It belongs to the somatotropin/prolactin family. As to expression, expressed specifically in the placenta. Predominantly expressed in spongiotrophoblast cells.

Its subcellular location is the secreted. This chain is Prolactin-8A8 (Prl8a8), found in Mus musculus (Mouse).